The following is a 246-amino-acid chain: Serine protease 1 (246 aa).

Positions 1–15 (MKTFIFLALLGATVA) are cleaved as a signal peptide. Positions 16–23 (FPIDDDDK) are cleaved as a propeptide — activation peptide. Positions 24-244 (IVGGYTCSRN…YVSWIQQTIA (221 aa)) constitute a Peptidase S1 domain. Disulfide bonds link C30-C160, C48-C64, C132-C233, C139-C206, C171-C185, and C196-C220. Residue H63 is the Charge relay system of the active site. Ca(2+) contacts are provided by E75, N77, V80, and E85. D107 (charge relay system) is an active-site residue. The active-site Charge relay system is the S200.

This sequence belongs to the peptidase S1 family. Interacts with SERPINA1. Requires Ca(2+) as cofactor.

The protein resides in the secreted. It is found in the extracellular space. It catalyses the reaction Preferential cleavage: Arg-|-Xaa, Lys-|-Xaa.. In Canis lupus familiaris (Dog), this protein is Serine protease 1.